Consider the following 624-residue polypeptide: Chaperone protein HtpG (624 aa).

The segment at 1 to 336 is a; substrate-binding; sequence MSMKGQETRG…SNDLPLNVSR (336 aa). The tract at residues 337–552 is b; it reads EILQDSRVTQ…ADEMSTQMAK (216 aa). The tract at residues 553–624 is c; the sequence is LFAAAGQQAP…IRRMNQLLTA (72 aa).

The protein belongs to the heat shock protein 90 family. As to quaternary structure, homodimer.

The protein resides in the cytoplasm. Molecular chaperone. Has ATPase activity. The chain is Chaperone protein HtpG from Yersinia enterocolitica serotype O:8 / biotype 1B (strain NCTC 13174 / 8081).